The following is a 38-amino-acid chain: Large ribosomal subunit protein bL36A (38 aa).

This sequence belongs to the bacterial ribosomal protein bL36 family.

The polypeptide is Large ribosomal subunit protein bL36A (Cronobacter sakazakii (strain ATCC BAA-894) (Enterobacter sakazakii)).